Consider the following 248-residue polypeptide: 4-hydroxy-tetrahydrodipicolinate reductase (248 aa).

NAD(+) contacts are provided by residues 9–14 (GAKGRV), 77–79 (GTT), and 104–107 (APNF). Residue His134 is the Proton donor/acceptor of the active site. His135 is a (S)-2,3,4,5-tetrahydrodipicolinate binding site. Lys138 serves as the catalytic Proton donor. 144–145 (GT) provides a ligand contact to (S)-2,3,4,5-tetrahydrodipicolinate.

The protein belongs to the DapB family.

The protein localises to the cytoplasm. The catalysed reaction is (S)-2,3,4,5-tetrahydrodipicolinate + NAD(+) + H2O = (2S,4S)-4-hydroxy-2,3,4,5-tetrahydrodipicolinate + NADH + H(+). The enzyme catalyses (S)-2,3,4,5-tetrahydrodipicolinate + NADP(+) + H2O = (2S,4S)-4-hydroxy-2,3,4,5-tetrahydrodipicolinate + NADPH + H(+). The protein operates within amino-acid biosynthesis; L-lysine biosynthesis via DAP pathway; (S)-tetrahydrodipicolinate from L-aspartate: step 4/4. Catalyzes the conversion of 4-hydroxy-tetrahydrodipicolinate (HTPA) to tetrahydrodipicolinate. The protein is 4-hydroxy-tetrahydrodipicolinate reductase of Corynebacterium glutamicum (strain R).